The chain runs to 343 residues: UPF0284 protein Msed_0735 (343 aa).

It belongs to the UPF0284 family.

The polypeptide is UPF0284 protein Msed_0735 (Metallosphaera sedula (strain ATCC 51363 / DSM 5348 / JCM 9185 / NBRC 15509 / TH2)).